The chain runs to 411 residues: Lysosome-associated membrane glycoprotein 3 (411 aa).

The signal sequence occupies residues 1-21 (MPGQISAVAVLFLSLTVILHG). Over 22–376 (YQIREKEFPK…NVNECLSDYT (355 aa)) the chain is Lumenal. Polar residues predominate over residues 172–192 (HKSTTNQRPTLSTNVLGTSTP). Positions 172–204 (HKSTTNQRPTLSTNVLGTSTPTHKDRSTTSPVP) are disordered. Residue Asn227 is glycosylated (N-linked (GlcNAc...) asparagine). Intrachain disulfides connect Cys232/Cys269 and Cys334/Cys371. A helical membrane pass occupies residues 377-397 (VVLPMVAIIVVVICVVGLSVY). The Cytoplasmic segment spans residues 398–411 (KIRQRHQSSAYQRI).

This sequence belongs to the LAMP family. Monomer. Interacts with FURIN.

It is found in the cell surface. The protein resides in the lysosome membrane. The protein localises to the cytoplasmic vesicle membrane. Its subcellular location is the early endosome membrane. In terms of biological role, lysosomal membrane glycoprotein which plays a role in the unfolded protein response (UPR) that contributes to protein degradation and cell survival during proteasomal dysfunction. Plays a role in the process of fusion of the lysosome with the autophagosome, thereby modulating the autophagic process. Promotes hepatocellular lipogenesis through activation of the PI3K/Akt pathway. May also play a role in dendritic cell function and in adaptive immunity. In Mus musculus (Mouse), this protein is Lysosome-associated membrane glycoprotein 3 (Lamp3).